Here is a 306-residue protein sequence, read N- to C-terminus: MNWITNYVRPRINSMLGRRDVPDNLWIKCPETGEMVFHKDLEENKWVVPASGYHMKMPAKARLADLFDGGKYEAFAQPKVAQDPLKFRDSKKYSDRLKDSRTKTEQEDTIVAGLGTVEGLKLVAVVHEFNFMGGSLGIAAGEAIVKAFERAIAEKCPLVMFPASGGARMQEGILSLMQLPRTTVAVDLLKEAGLPYIVVLTNPTTGGVTASYAMLGDLHIAEPGAEICFAGKRVIEQTIREKLPEGFQTSEYLLEHGMVDMVVKRHDIPATLARTLKILTKQPATVVGANDDKTLSVIEASRAVSA.

Residues 25 to 294 (LWIKCPETGE…TVVGANDDKT (270 aa)) enclose the CoA carboxyltransferase N-terminal domain.

Belongs to the AccD/PCCB family. As to quaternary structure, acetyl-CoA carboxylase is a heterohexamer composed of biotin carboxyl carrier protein (AccB), biotin carboxylase (AccC) and two subunits each of ACCase subunit alpha (AccA) and ACCase subunit beta (AccD).

It localises to the cytoplasm. The enzyme catalyses N(6)-carboxybiotinyl-L-lysyl-[protein] + acetyl-CoA = N(6)-biotinyl-L-lysyl-[protein] + malonyl-CoA. Its pathway is lipid metabolism; malonyl-CoA biosynthesis; malonyl-CoA from acetyl-CoA: step 1/1. Functionally, component of the acetyl coenzyme A carboxylase (ACC) complex. Biotin carboxylase (BC) catalyzes the carboxylation of biotin on its carrier protein (BCCP) and then the CO(2) group is transferred by the transcarboxylase to acetyl-CoA to form malonyl-CoA. The chain is Acetyl-coenzyme A carboxylase carboxyl transferase subunit beta from Allorhizobium ampelinum (strain ATCC BAA-846 / DSM 112012 / S4) (Agrobacterium vitis (strain S4)).